The chain runs to 445 residues: T-box transcription factor TBX19 (445 aa).

Residues 45-218 (LEDAPLWQRF…YNPFAKAFLD (174 aa)) constitute a DNA-binding region (T-box).

It is found in the nucleus. Functionally, transcriptional regulator involved in developmental processes. Can activate POMC gene expression and repress the alpha glycoprotein subunit and thyroid-stimulating hormone beta promoters. The chain is T-box transcription factor TBX19 from Canis lupus familiaris (Dog).